A 502-amino-acid chain; its full sequence is Neuronal acetylcholine receptor subunit alpha-7 (502 aa).

A signal peptide spans 1–22; that stretch reads MCGGRGGIWLALAAALLHVSLQ. Residues 23–233 lie on the Extracellular side of the membrane; sequence GEFQRRLYKE…VTMRRRTLYY (211 aa). 2 residues coordinate Ca(2+): R42 and V44. N46, N90, and N133 each carry an N-linked (GlcNAc...) asparagine glycan. A disulfide bond links C150 and C164. Positions 172 and 210 each coordinate Ca(2+). Cysteines 212 and 213 form a disulfide. 3 helical membrane-spanning segments follow: residues 234–254, 262–282, and 295–315; these read GLNL…VFLL, ISLG…VAEI, and QYFA…VIVL. Residues 260 to 267 are essential for TMEM35A/NACHO-mediated proper subunit assembly and trafficking to cell membrane; the sequence is EKISLGIT. Over 316-469 the chain is Cytoplasmic; the sequence is RYHHHDPDGG…WKFAACVVDR (154 aa). A helical membrane pass occupies residues 470-490; it reads LCLMAFSVFTIICTIGILMSA.

This sequence belongs to the ligand-gated ion channel (TC 1.A.9) family. Acetylcholine receptor (TC 1.A.9.1) subfamily. Alpha-7/CHRNA7 sub-subfamily. In terms of assembly, homopentamer. Can also form heteropentamers with CHRNB2, mainly found in basal forebrain cholinergic neurons. Interacts with RIC3; which is required for proper folding and assembly. Interacts with LYPD6. Interacts with CANX. Glycosylations at Asn-46, Asn-90 and Asn-133 are essential for TMEM35A/NACHO-mediated proper subunit assembly and trafficking to the cell membrane. Expressed in neurons. Expressed in umbrella cells of urothelium (at protein level).

Its subcellular location is the postsynaptic cell membrane. The protein localises to the cell membrane. The enzyme catalyses Ca(2+)(in) = Ca(2+)(out). It carries out the reaction K(+)(in) = K(+)(out). The catalysed reaction is Na(+)(in) = Na(+)(out). It catalyses the reaction choline(out) = choline(in). The enzyme catalyses NH4(+)(in) = NH4(+)(out). It carries out the reaction L-arginine(in) = L-arginine(out). The catalysed reaction is guanidine(out) = guanidine(in). With respect to regulation, activated by a myriad of ligands such as acetylcholine, cytisine, nicotine, choline and epibatidine. Oligomeric amyloid-beta protein 42 activates specifially CHRNA7:CHRNB2 nAchRs. Activity is modulated by positive allosteric modulators (PAMs), such as flavonoids, with a wide range of chemical diversity, pharmacological sensitivity and efficacy. AChR activity is inhibited by the antagonists alpha-conotoxons RgIA, ImI and ImII, small disulfide-constrained peptides from cone snails. Alpha-conotoxin PnIC selectively inhibits CHRNA7:CHRNB2 over CHRNA7 homopentamer. Functionally, component of neuronal acetylcholine receptors (nAChRs) that function as pentameric, ligand-gated cation channels with high calcium permeability among other activities. nAChRs are excitatory neurotrasnmitter receptors formed by a collection of nAChR subunits known to mediate synaptic transmission in the nervous system and the neuromuscular junction. Each nAchR subunit confers differential attributes to channel properties, including activation, deactivation and desensitization kinetics, pH sensitivity, cation permeability, and binding to allosteric modulators. CHRNA7 forms homopentameric neuronal acetylcholine receptors abundantly expressed in the central nervous system, characterized by fast desensitization and high calcium permeability. Also forms heteropentamers with CHRNB2, mainly expressed in basal forebrain cholinergic neurons. Involved in the modulation of calcium-dependent signaling pathways and influences the release of neurotransmitters, including dopamine, glutamate and GABA. Also expressed in non-neuronal cells such as immune cells like lymphocytes, monocytes and macrophages. In T cells, activation induces metabotropic signaling that results in an increase of intracellular Ca2+ concentrations, independent of ionotropic receptor functions. In macrophages, required for acetylcholine-mediated inhibition of TNF and other inflammatory cytokine release. Once activated by acetylcholine, nicotine or other agonists, selectively inhibits production of pro-inflammatory cytokines while leaving anti-inflammatory cytokines undisturbed. Stimulates the cholinergic anti-inflammatory pathway, controlling inflammation by inhibiting NFKB nuclear translocation and activating the JAK2-STAT3 pathway, independently of ion channel activity. Also expressed in the urothelium where it modulates reflex bladder activity by increasing intracellular calcium through internal stores and decreasing basal ATP release. In Rattus norvegicus (Rat), this protein is Neuronal acetylcholine receptor subunit alpha-7 (Chrna7).